A 537-amino-acid polypeptide reads, in one-letter code: Probable metalloreductase AIM14 (537 aa).

7 consecutive transmembrane segments (helical) span residues 20–40 (GFFI…VKFI), 58–78 (ITNP…IFTG), 95–112 (RYGR…YLVL), 133–155 (KWTS…YKWI), 167–187 (FLNL…IISI), 194–216 (VYST…ITFH), and 221–238 (VTVF…QLYL). Residues 97 to 213 (GRMAYCLIPL…VTAWSMVILI (117 aa)) form the Ferric oxidoreductase domain. The region spanning 187-363 (IRPFRRKVYS…GGSGISLGLP (177 aa)) is the FAD-binding FR-type domain. Positions 432-475 (EEQGHGLLNNDNENGIELQNMPKTNEESSEANSTNSKNNKDNQE) are disordered.

It belongs to the ferric reductase (FRE) family. AIM14 subfamily.

Its subcellular location is the membrane. Functionally, probable cell surface metalloreductase. May be involved in iron or copper homeostasis. The polypeptide is Probable metalloreductase AIM14 (AIM14) (Candida dubliniensis (strain CD36 / ATCC MYA-646 / CBS 7987 / NCPF 3949 / NRRL Y-17841) (Yeast)).